We begin with the raw amino-acid sequence, 547 residues long: Mercuric reductase (547 aa).

Residues 5–70 (APTELAITGM…AVVASGYGVH (66 aa)) enclose the HMA domain. A metal cation contacts are provided by cysteine 16 and cysteine 19. FAD is bound by residues alanine 96 and threonine 121. A disulfide bond links cysteine 122 and cysteine 127. Lysine 131, alanine 197, aspartate 389, and valine 397 together coordinate FAD. Residues cysteine 544 and cysteine 545 each contribute to the Hg(2+) site.

It belongs to the class-I pyridine nucleotide-disulfide oxidoreductase family. In terms of assembly, homodimer. FAD is required as a cofactor.

The enzyme catalyses Hg + NADP(+) + H(+) = Hg(2+) + NADPH. Resistance to Hg(2+) in bacteria appears to be governed by a specialized system which includes mercuric reductase. MerA protein is responsible for volatilizing mercury as Hg(0). This chain is Mercuric reductase (merA), found in Acidithiobacillus ferrooxidans (Thiobacillus ferrooxidans).